The sequence spans 188 residues: Elongation factor P-like protein (188 aa).

Belongs to the elongation factor P family.

In Xanthomonas campestris pv. campestris (strain 8004), this protein is Elongation factor P-like protein.